A 460-amino-acid chain; its full sequence is Armadillo repeat-containing protein LFR (460 aa).

Over residues 1–10 (MSHVRSAPAG) the composition is skewed to low complexity. The disordered stretch occupies residues 1-32 (MSHVRSAPAGKSGGGGGSTPAKRGRPFGSTTG). 3 ARM repeats span residues 225–267 (ENET…NLAP), 321–360 (NEPF…NVAE), and 364–405 (DFRL…SLVS).

As to quaternary structure, interacts with CHR719, SWI3A and SWI3C. As to expression, expressed at low levels in coleoptiles, leaf tongues, mature leaves and nodes during the vegetative phase. Highly expressed in reproductive tissues such as young panicles, early developing seeds, embryos and endosperms.

It localises to the nucleus. Its function is as follows. Plays critical roles in both embryo and endosperm development. Required for free nuclei division and cellularization in early endosperm development, by preventing premature cell death in the endosperm. Involved in the regulation of pattern formation and organ differentiation during embryogenesis, by regulating genes involved in the early stages of seed development. The chain is Armadillo repeat-containing protein LFR from Oryza sativa subsp. japonica (Rice).